Here is a 1597-residue protein sequence, read N- to C-terminus: Pentafunctional AROM polypeptide (1597 aa).

The segment at 1 to 384 (MGVPTKISIL…HEPRASTVSN (384 aa)) is 3-dehydroquinate synthase. Residues 44-46 (DTN), 81-84 (ESSK), 114-116 (GGV), and aspartate 119 each bind NAD(+). 7-phospho-2-dehydro-3-deoxy-D-arabino-heptonate is bound at residue arginine 130. 139–140 (TT) is an NAD(+) binding site. 2 residues coordinate 7-phospho-2-dehydro-3-deoxy-D-arabino-heptonate: aspartate 146 and lysine 152. Residue lysine 161 coordinates NAD(+). 7-phospho-2-dehydro-3-deoxy-D-arabino-heptonate is bound at residue asparagine 162. NAD(+) is bound by residues 179 to 182 (FLNT) and asparagine 190. Glutamate 194 is a Zn(2+) binding site. Residues 194-197 (EVIK) and lysine 250 each bind 7-phospho-2-dehydro-3-deoxy-D-arabino-heptonate. The active-site Proton acceptor; for 3-dehydroquinate synthase activity is the glutamate 260. Residues 264–268 (RNLLN) and histidine 271 each bind 7-phospho-2-dehydro-3-deoxy-D-arabino-heptonate. Histidine 271 contacts Zn(2+). Histidine 275 acts as the Proton acceptor; for 3-dehydroquinate synthase activity in catalysis. Histidine 287 and lysine 356 together coordinate 7-phospho-2-dehydro-3-deoxy-D-arabino-heptonate. Histidine 287 serves as a coordination point for Zn(2+). An EPSP synthase region spans residues 397–842 (VSPGVPKNLN…WDSLAQTFKV (446 aa)). Cysteine 824 serves as the catalytic For EPSP synthase activity. Residues 866–1057 (ASIFIIGMRG…RSKENTFFVS (192 aa)) form a shikimate kinase region. ATP is bound at residue 872-879 (GMRGAGKT). The interval 1058 to 1278 (LTLPDLAPAA…AAPGQLSARE (221 aa)) is 3-dehydroquinase. Histidine 1181 functions as the Proton acceptor; for 3-dehydroquinate dehydratase activity in the catalytic mechanism. The active-site Schiff-base intermediate with substrate; for 3-dehydroquinate dehydratase activity is lysine 1209. The tract at residues 1291–1597 (SKKFAVIGNP…VQPKDDDIST (307 aa)) is shikimate dehydrogenase.

It in the N-terminal section; belongs to the sugar phosphate cyclases superfamily. Dehydroquinate synthase family. The protein in the 2nd section; belongs to the EPSP synthase family. In the 3rd section; belongs to the shikimate kinase family. This sequence in the 4th section; belongs to the type-I 3-dehydroquinase family. It in the C-terminal section; belongs to the shikimate dehydrogenase family. As to quaternary structure, homodimer. The cofactor is Zn(2+).

Its subcellular location is the cytoplasm. The catalysed reaction is 7-phospho-2-dehydro-3-deoxy-D-arabino-heptonate = 3-dehydroquinate + phosphate. It carries out the reaction 3-dehydroquinate = 3-dehydroshikimate + H2O. It catalyses the reaction shikimate + NADP(+) = 3-dehydroshikimate + NADPH + H(+). The enzyme catalyses shikimate + ATP = 3-phosphoshikimate + ADP + H(+). The catalysed reaction is 3-phosphoshikimate + phosphoenolpyruvate = 5-O-(1-carboxyvinyl)-3-phosphoshikimate + phosphate. It participates in metabolic intermediate biosynthesis; chorismate biosynthesis; chorismate from D-erythrose 4-phosphate and phosphoenolpyruvate: step 2/7. It functions in the pathway metabolic intermediate biosynthesis; chorismate biosynthesis; chorismate from D-erythrose 4-phosphate and phosphoenolpyruvate: step 3/7. The protein operates within metabolic intermediate biosynthesis; chorismate biosynthesis; chorismate from D-erythrose 4-phosphate and phosphoenolpyruvate: step 4/7. Its pathway is metabolic intermediate biosynthesis; chorismate biosynthesis; chorismate from D-erythrose 4-phosphate and phosphoenolpyruvate: step 5/7. It participates in metabolic intermediate biosynthesis; chorismate biosynthesis; chorismate from D-erythrose 4-phosphate and phosphoenolpyruvate: step 6/7. Its function is as follows. The AROM polypeptide catalyzes 5 consecutive enzymatic reactions in prechorismate polyaromatic amino acid biosynthesis. This Ajellomyces dermatitidis (strain ER-3 / ATCC MYA-2586) (Blastomyces dermatitidis) protein is Pentafunctional AROM polypeptide.